We begin with the raw amino-acid sequence, 513 residues long: Probable cytosol aminopeptidase (513 aa).

Residues Lys275 and Asp280 each contribute to the Mn(2+) site. Lys287 is a catalytic residue. Mn(2+)-binding residues include Asp298, Asp357, and Glu359. Arg361 is a catalytic residue.

This sequence belongs to the peptidase M17 family. Mn(2+) serves as cofactor.

It localises to the cytoplasm. It catalyses the reaction Release of an N-terminal amino acid, Xaa-|-Yaa-, in which Xaa is preferably Leu, but may be other amino acids including Pro although not Arg or Lys, and Yaa may be Pro. Amino acid amides and methyl esters are also readily hydrolyzed, but rates on arylamides are exceedingly low.. It carries out the reaction Release of an N-terminal amino acid, preferentially leucine, but not glutamic or aspartic acids.. Presumably involved in the processing and regular turnover of intracellular proteins. Catalyzes the removal of unsubstituted N-terminal amino acids from various peptides. The sequence is that of Probable cytosol aminopeptidase from Streptomyces avermitilis (strain ATCC 31267 / DSM 46492 / JCM 5070 / NBRC 14893 / NCIMB 12804 / NRRL 8165 / MA-4680).